Reading from the N-terminus, the 544-residue chain is Baeyer-Villiger monooxygenase (544 aa).

Phenylalanine 27, glutamate 47, tryptophan 56, aspartate 67, tyrosine 73, and valine 119 together coordinate FAD.

The protein belongs to the FAD-binding monooxygenase family. FAD is required as a cofactor.

Catalyzes a Baeyer-Villiger oxidation reaction, i.e. the insertion of an oxygen atom into a carbon-carbon bond adjacent to a carbonyl, which converts ketones to esters or lactones using NADPH as an electron donor. Besides cycloalkanones, can use cyclic alpha,beta-unsaturated ketones as substrates, leading to enol-lactones. Can also act on methylated cycloalkanones and methylated cycloalkenones with high enantioselectivity in some cases. The sequence is that of Baeyer-Villiger monooxygenase from Parvibaculum lavamentivorans (strain DS-1 / DSM 13023 / NCIMB 13966).